A 209-amino-acid polypeptide reads, in one-letter code: Thymidine kinase (209 aa).

ATP contacts are provided by residues 9–16 and 88–91; these read AAMNAGKS and DEAQ. Glu89 (proton acceptor) is an active-site residue. Positions 146, 148, 183, and 186 each coordinate Zn(2+).

This sequence belongs to the thymidine kinase family. Homotetramer.

It is found in the cytoplasm. The enzyme catalyses thymidine + ATP = dTMP + ADP + H(+). The polypeptide is Thymidine kinase (Legionella pneumophila (strain Paris)).